The primary structure comprises 374 residues: Chaperone protein DnaJ (374 aa).

Residues 6–71 (DYYAVLEVTR…QKRAAYDRFG (66 aa)) form the J domain. The CR-type zinc finger occupies 130 to 209 (GVKKPITVPT…CHGAGTVERE (80 aa)). The Zn(2+) site is built by cysteine 143, cysteine 146, cysteine 161, cysteine 164, cysteine 183, cysteine 186, cysteine 197, and cysteine 200. CXXCXGXG motif repeat units follow at residues 143–150 (CESCEGTG), 161–168 (CPTCHGAG), 183–190 (CPTCHGAG), and 197–204 (CAACHGAG).

Belongs to the DnaJ family. In terms of assembly, homodimer. It depends on Zn(2+) as a cofactor.

The protein localises to the cytoplasm. Participates actively in the response to hyperosmotic and heat shock by preventing the aggregation of stress-denatured proteins and by disaggregating proteins, also in an autonomous, DnaK-independent fashion. Unfolded proteins bind initially to DnaJ; upon interaction with the DnaJ-bound protein, DnaK hydrolyzes its bound ATP, resulting in the formation of a stable complex. GrpE releases ADP from DnaK; ATP binding to DnaK triggers the release of the substrate protein, thus completing the reaction cycle. Several rounds of ATP-dependent interactions between DnaJ, DnaK and GrpE are required for fully efficient folding. Also involved, together with DnaK and GrpE, in the DNA replication of plasmids through activation of initiation proteins. In Gluconacetobacter diazotrophicus (strain ATCC 49037 / DSM 5601 / CCUG 37298 / CIP 103539 / LMG 7603 / PAl5), this protein is Chaperone protein DnaJ.